Here is a 307-residue protein sequence, read N- to C-terminus: MSPTPIKHYLQFSDLSADEYEYLLDRARILKAKFKNYETWHPLHDRTLAMIFEKNSTRTRLSFEAGIHQLGGHAVFLNTRDSQLGRGEPIEDAAQVISRMVDIIMIRTFGQEIIDRFAKHSRVPVINGLTNEYHPCQVLADVFTYIEQRGTIAGKTVAWIGDANNMAYTWIQAAERLDFTFHFSAPPGYQLDPAMVPDWAASRVKVFDNPLDACQGAHLVTTDVWTSMGFEAENDARKRAFKDWMVTTAMMDRAADDALFMHCLPAHRGEEVEAAVIDGPRSVVWEEAENRLHVQKALMEYLLCGRY.

Carbamoyl phosphate is bound by residues 56–59 (STRT), Q83, R107, and 134–137 (HPCQ). Residues N165, D223, and 227–228 (SM) each bind L-ornithine. Carbamoyl phosphate is bound by residues 263–264 (CL) and R291.

The protein belongs to the aspartate/ornithine carbamoyltransferase superfamily. OTCase family.

It is found in the cytoplasm. The catalysed reaction is carbamoyl phosphate + L-ornithine = L-citrulline + phosphate + H(+). The protein operates within amino-acid biosynthesis; L-arginine biosynthesis; L-arginine from L-ornithine and carbamoyl phosphate: step 1/3. In terms of biological role, reversibly catalyzes the transfer of the carbamoyl group from carbamoyl phosphate (CP) to the N(epsilon) atom of ornithine (ORN) to produce L-citrulline. This is Ornithine carbamoyltransferase from Cupriavidus metallidurans (strain ATCC 43123 / DSM 2839 / NBRC 102507 / CH34) (Ralstonia metallidurans).